Reading from the N-terminus, the 87-residue chain is uncharacterized protein (87 aa).

Helical transmembrane passes span 10-30 and 43-63; these read VAFTVLAYFTFFAGVFLFSIG and GYYIAVMILVAVGAILTQKVT.

The protein resides in the cell membrane. This is an uncharacterized protein from Bacillus subtilis (strain 168).